A 353-amino-acid chain; its full sequence is 4-hydroxy-3-methylbut-2-en-1-yl diphosphate synthase (flavodoxin) (353 aa).

4 residues coordinate [4Fe-4S] cluster: C263, C266, C298, and E305.

The protein belongs to the IspG family. The cofactor is [4Fe-4S] cluster.

The enzyme catalyses (2E)-4-hydroxy-3-methylbut-2-enyl diphosphate + oxidized [flavodoxin] + H2O + 2 H(+) = 2-C-methyl-D-erythritol 2,4-cyclic diphosphate + reduced [flavodoxin]. It participates in isoprenoid biosynthesis; isopentenyl diphosphate biosynthesis via DXP pathway; isopentenyl diphosphate from 1-deoxy-D-xylulose 5-phosphate: step 5/6. In terms of biological role, converts 2C-methyl-D-erythritol 2,4-cyclodiphosphate (ME-2,4cPP) into 1-hydroxy-2-methyl-2-(E)-butenyl 4-diphosphate. This is 4-hydroxy-3-methylbut-2-en-1-yl diphosphate synthase (flavodoxin) from Geobacter sulfurreducens (strain ATCC 51573 / DSM 12127 / PCA).